A 440-amino-acid polypeptide reads, in one-letter code: O-glycoside alpha-1,2-mannosyltransferase homolog 4 (440 aa).

Topologically, residues Met1–Phe35 are cytoplasmic. Residues Val36 to Ile56 traverse the membrane as a helical; Signal-anchor for type II membrane protein segment. At Tyr57–Glu440 the chain is on the lumenal side. Glu336 acts as the Nucleophile in catalysis.

This sequence belongs to the glycosyltransferase 15 family.

Its subcellular location is the cytoplasm. The protein localises to the nucleus. The protein resides in the golgi apparatus membrane. Functionally, probable mannosyltransferase involved in O-glycosylation of cell wall and secreted proteins. Transfers an alpha-D-mannosyl residue from GDP-mannose into lipid-linked oligosaccharide, forming an alpha-(1-&gt;2)-D-mannosyl-D-mannose linkage. The sequence is that of O-glycoside alpha-1,2-mannosyltransferase homolog 4 (omh4) from Schizosaccharomyces pombe (strain 972 / ATCC 24843) (Fission yeast).